Reading from the N-terminus, the 304-residue chain is Homoserine kinase (304 aa).

90–100 (PLARGLGSSAS) contributes to the ATP binding site.

This sequence belongs to the GHMP kinase family. Homoserine kinase subfamily.

Its subcellular location is the cytoplasm. It carries out the reaction L-homoserine + ATP = O-phospho-L-homoserine + ADP + H(+). It functions in the pathway amino-acid biosynthesis; L-threonine biosynthesis; L-threonine from L-aspartate: step 4/5. Functionally, catalyzes the ATP-dependent phosphorylation of L-homoserine to L-homoserine phosphate. The polypeptide is Homoserine kinase (Staphylococcus aureus (strain bovine RF122 / ET3-1)).